Reading from the N-terminus, the 123-residue chain is Small ribosomal subunit protein uS13 (123 aa).

The segment at 97 to 123 is disordered; it reads PVRGQRTHTNAKTRKGRSKLPVAAKKK.

It belongs to the universal ribosomal protein uS13 family. Part of the 30S ribosomal subunit. Forms a loose heterodimer with protein S19. Forms two bridges to the 50S subunit in the 70S ribosome.

Functionally, located at the top of the head of the 30S subunit, it contacts several helices of the 16S rRNA. In the 70S ribosome it contacts the 23S rRNA (bridge B1a) and protein L5 of the 50S subunit (bridge B1b), connecting the 2 subunits; these bridges are implicated in subunit movement. Contacts the tRNAs in the A and P-sites. The protein is Small ribosomal subunit protein uS13 of Ehrlichia canis (strain Jake).